Consider the following 193-residue polypeptide: Holliday junction branch migration complex subunit RuvA (193 aa).

Residues 1 to 64 (MIGRIAGTLL…EDAHLLYGFL (64 aa)) form a domain I region. Positions 65 to 139 (TPQERSTFRE…GKLGADLGPL (75 aa)) are domain II. The interval 139-143 (LAGAA) is flexible linker. Positions 144 to 193 (SPSDHAADILNALLALGYSEKEALAAIKNVPAGTGVSEGIKLSLKALSKA) are domain III.

The protein belongs to the RuvA family. Homotetramer. Forms an RuvA(8)-RuvB(12)-Holliday junction (HJ) complex. HJ DNA is sandwiched between 2 RuvA tetramers; dsDNA enters through RuvA and exits via RuvB. An RuvB hexamer assembles on each DNA strand where it exits the tetramer. Each RuvB hexamer is contacted by two RuvA subunits (via domain III) on 2 adjacent RuvB subunits; this complex drives branch migration. In the full resolvosome a probable DNA-RuvA(4)-RuvB(12)-RuvC(2) complex forms which resolves the HJ.

The protein localises to the cytoplasm. Its function is as follows. The RuvA-RuvB-RuvC complex processes Holliday junction (HJ) DNA during genetic recombination and DNA repair, while the RuvA-RuvB complex plays an important role in the rescue of blocked DNA replication forks via replication fork reversal (RFR). RuvA specifically binds to HJ cruciform DNA, conferring on it an open structure. The RuvB hexamer acts as an ATP-dependent pump, pulling dsDNA into and through the RuvAB complex. HJ branch migration allows RuvC to scan DNA until it finds its consensus sequence, where it cleaves and resolves the cruciform DNA. This chain is Holliday junction branch migration complex subunit RuvA, found in Burkholderia thailandensis (strain ATCC 700388 / DSM 13276 / CCUG 48851 / CIP 106301 / E264).